Reading from the N-terminus, the 277-residue chain is Ribosomal RNA small subunit methyltransferase A (277 aa).

Residues N20, L22, G47, E68, D93, and N114 each coordinate S-adenosyl-L-methionine.

The protein belongs to the class I-like SAM-binding methyltransferase superfamily. rRNA adenine N(6)-methyltransferase family. RsmA subfamily.

Its subcellular location is the cytoplasm. The catalysed reaction is adenosine(1518)/adenosine(1519) in 16S rRNA + 4 S-adenosyl-L-methionine = N(6)-dimethyladenosine(1518)/N(6)-dimethyladenosine(1519) in 16S rRNA + 4 S-adenosyl-L-homocysteine + 4 H(+). Specifically dimethylates two adjacent adenosines (A1518 and A1519) in the loop of a conserved hairpin near the 3'-end of 16S rRNA in the 30S particle. May play a critical role in biogenesis of 30S subunits. This is Ribosomal RNA small subunit methyltransferase A from Aliivibrio salmonicida (strain LFI1238) (Vibrio salmonicida (strain LFI1238)).